Reading from the N-terminus, the 179-residue chain is MTFDLDIKNTVRTIPDYPKPGILFRDITTLLADARAFRRAVDELVHPWAGSKIDKVAGIEARGFILGGAVAHQLSAGFVPIRKKGKLPHKTVSMSYALEYGTDEMEMHVDAVQPGERVILVDDLIATGGTAEGAVKLLRQIGATVVAACFIIDLPDLGGAAKLRALDVPVRSLIAFDGH.

This sequence belongs to the purine/pyrimidine phosphoribosyltransferase family. As to quaternary structure, homodimer.

It is found in the cytoplasm. It catalyses the reaction AMP + diphosphate = 5-phospho-alpha-D-ribose 1-diphosphate + adenine. It participates in purine metabolism; AMP biosynthesis via salvage pathway; AMP from adenine: step 1/1. Functionally, catalyzes a salvage reaction resulting in the formation of AMP, that is energically less costly than de novo synthesis. This chain is Adenine phosphoribosyltransferase, found in Bradyrhizobium sp. (strain ORS 278).